Reading from the N-terminus, the 267-residue chain is Ubiquinone biosynthesis protein COQ4, mitochondrial (267 aa).

Residues 1 to 17 (MSRLKIPSQLLRGGRGF) constitute a mitochondrion transit peptide. Residues histidine 153, aspartate 154, histidine 157, and glutamate 169 each contribute to the Zn(2+) site.

The protein belongs to the COQ4 family. As to quaternary structure, component of a multi-subunit COQ enzyme complex, composed of at least COQ3, COQ4, COQ5, COQ6, COQ7 and COQ9. Zn(2+) is required as a cofactor.

The protein localises to the mitochondrion inner membrane. It carries out the reaction a 4-hydroxy-3-methoxy-5-(all-trans-polyprenyl)benzoate + H(+) = a 2-methoxy-6-(all-trans-polyprenyl)phenol + CO2. It functions in the pathway cofactor biosynthesis; ubiquinone biosynthesis. In terms of biological role, lyase that catalyzes the C1-decarboxylation of 4-hydroxy-3-methoxy-5-(all-trans-polyprenyl)benzoic acid into 2-methoxy-6-(all-trans-polyprenyl)phenol during ubiquinone biosynthesis. The protein is Ubiquinone biosynthesis protein COQ4, mitochondrial of Arthroderma otae (strain ATCC MYA-4605 / CBS 113480) (Microsporum canis).